The chain runs to 354 residues: Cellular communication network factor 6 (354 aa).

Residues 1–23 form the signal peptide; that stretch reads MQGLLFSTLLLAGLAQFCCRVQG. Residues 44–117 form the IGFBP N-terminal domain; that stretch reads RKQFCHWPCK…RYETGVCAYL (74 aa). 6 disulfide bridges follow: Cys-48–Cys-72, Cys-52–Cys-74, Cys-54–Cys-75, Cys-61–Cys-78, Cys-86–Cys-100, and Cys-92–Cys-114. The N-linked (GlcNAc...) asparagine glycan is linked to Asn-178. The TSP type-1 domain occupies 208 to 253; sequence KCLVQATKWTPCSRTCGMGISNRVTNENSNCEMRKEKRLCYIQPCD. Cystine bridges form between Cys-268–Cys-305, Cys-285–Cys-319, Cys-296–Cys-335, Cys-299–Cys-337, and Cys-304–Cys-341. Residues 268–342 form the CTCK domain; it reads CQPTFQLSKA…TSCVCQRNCR (75 aa). Asn-308 is a glycosylation site (N-linked (GlcNAc...) asparagine).

This sequence belongs to the CCN family. Predominant expression in adult kidney and testis and fetal kidney. Weaker expression found in placenta, ovary, prostate and small intestine. Also expressed in skeletally-derived cells such as synoviocytes and articular cartilage chondrocytes.

It is found in the secreted. It localises to the mitochondrion. Plays a role in mitochondrial electron transport and mitochondrial respiration. Through its regulation of the mitochondrial function may play a role in normal postnatal skeletal growth and cartilage homeostasis. This Homo sapiens (Human) protein is Cellular communication network factor 6.